Here is a 439-residue protein sequence, read N- to C-terminus: C4-dicarboxylate transport protein (439 aa).

The next 9 membrane-spanning stretches (helical) occupy residues 9–29, 45–65, 77–97, 145–165, 185–205, 223–243, 290–310, 332–352, and 353–373; these read SLYA…HFLP, LIKM…IAGM, LALL…LIIV, AFAK…GFAL, VLFT…FGAM, LMGA…GIVT, VVGL…AIYL, TLLA…GSGF, and IVLA…LALI. Residues 417–439 form a disordered region; sequence NESPQAADQPEKILDQTNTKLGA.

This sequence belongs to the dicarboxylate/amino acid:cation symporter (DAACS) (TC 2.A.23) family.

The protein localises to the cell inner membrane. In terms of biological role, responsible for the transport of dicarboxylates such as succinate, fumarate, and malate from the periplasm across the membrane. The polypeptide is C4-dicarboxylate transport protein (Janthinobacterium sp. (strain Marseille) (Minibacterium massiliensis)).